The following is a 454-amino-acid chain: Nucleoprotein (454 aa).

The tract at residues Met-1–Val-62 is disordered. Over residues Ala-10–Gly-23 the composition is skewed to low complexity. Positions Lys-50–Ser-61 are enriched in polar residues. The interval Gln-56–Ser-197 is RNA-binding. A CoV N NTD domain is found at Pro-64–Gly-193. Arg-109 and Arg-125 together coordinate RNA. 4 disordered regions span residues Thr-160–Phe-179, Pro-186–Lys-230, Pro-271–Pro-292, and Asp-382–Thr-428. Phosphoserine; by host is present on Ser-162. Arg-167 serves as a coordination point for RNA. Ser-170 carries the phosphoserine; by host modification. Residue Thr-177 is modified to Phosphothreonine; by host. Residues Gly-193–Pro-212 are compositionally biased toward low complexity. A Phosphoserine; by host modification is found at Ser-194. The segment covering Arg-215–Ser-227 has biased composition (polar residues). The CoV N CTD domain occupies Ala-260–Gly-383. The dimerization stretch occupies residues Ile-267 to Gly-383. 2 positions are modified to phosphoserine; by host: Ser-389 and Ser-424. The residue at position 428 (Thr-428) is a Phosphothreonine; by host.

This sequence belongs to the betacoronavirus nucleocapsid protein family. In terms of assembly, homooligomer. Both monomeric and oligomeric forms interact with RNA. Interacts with protein M. Interacts with NSP3; this interaction serves to tether the genome to the newly translated replicase-transcriptase complex at a very early stage of infection. In terms of processing, ADP-ribosylated. The ADP-ribosylation is retained in the virion during infection. Post-translationally, phosphorylated on serine and threonine residues.

It localises to the virion. It is found in the host endoplasmic reticulum-Golgi intermediate compartment. The protein localises to the host Golgi apparatus. Functionally, major structural component of virions that associates with genomic RNA to form a long, flexible, helical nucleocapsid. Interaction with the M protein leads to the formation of virus particles. Binds to cellular membranes and phospholipids. Elicits cell-mediated immunity. May play roles in viral transcription and translation, and/or replication. Induces transcription of the prothrombinase (FGL2) and elevates procoagulant activity. Its function is as follows. Packages the positive strand viral genome RNA into a helical ribonucleocapsid (RNP) and plays a fundamental role during virion assembly through its interactions with the viral genome and membrane protein M. Plays an important role in enhancing the efficiency of subgenomic viral RNA transcription as well as viral replication. This chain is Nucleoprotein, found in Mus musculus (Mouse).